The following is a 1774-amino-acid chain: Collagen alpha-1(XVIII) chain (1774 aa).

The first 26 residues, 1 to 26 (MAPDPSRRLCLLLLLLLSCRLVPASA), serve as a signal peptide directing secretion. Positions 27-785 (DGNSLSPLNP…QNPGRGLIKG (759 aa)) are nonhelical region 1 (NC1). 2 disordered regions span residues 47-113 (DSLE…TPAV) and 218-269 (LPPF…LEGK). Polar residues-rich tracts occupy residues 55–87 (KPQN…TPAS) and 244–256 (LSSS…SWGN). 2 N-linked (GlcNAc...) asparagine glycosylation sites follow: asparagine 354 and asparagine 361. Residues 365–482 (TSTSRCLPLP…SQEDGYCVFI (118 aa)) enclose the FZ domain. 5 cysteine pairs are disulfide-bonded: cysteine 370–cysteine 433, cysteine 380–cysteine 426, cysteine 417–cysteine 455, cysteine 444–cysteine 479, and cysteine 448–cysteine 468. The region spanning 522-704 (GPDSNSGQVA…EDRASGDFGS (183 aa)) is the Laminin G-like domain. A glycan (N-linked (GlcNAc...) asparagine) is linked at asparagine 585. Residues 681–1458 (RVSPVHCLDE…PPGPPGAMGA (778 aa)) form a disordered region. Over residues 708-717 (ESSKSHKEDT) the composition is skewed to basic and acidic residues. Threonine 730 bears the Phosphothreonine mark. The interval 786-812 (GMKGQKGEPGAQGPPGPAGPQGPAGPV) is triple-helical region 1 (COL1). Low complexity predominate over residues 809 to 824 (AGPVVQSPNSQPVPGA). The tract at residues 813–822 (VQSPNSQPVP) is nonhelical region 2 (NC2). Positions 823–878 (GAQGPPGPQGPPGKDGTPGRDGEPGDPGEDGRPGDTGPQGFPGTPGDVGPKGEKGD) constitute a Collagen-like 1 domain. The triple-helical region 2 (COL2) stretch occupies residues 823-896 (GAQGPPGPQG…PGPPGPPGPS (74 aa)). Residues 839-855 (TPGRDGEPGDPGEDGRP) show a composition bias toward basic and acidic residues. Positions 884-895 (RGPPGPPGPPGP) are enriched in pro residues. The interval 897 to 920 (FRQDKLTFIDMEGSGFSGDIESLR) is nonhelical region 3 (NC3). An O-linked (Xyl...) (chondroitin sulfate) serine glycan is attached at serine 910. The segment at 921-1042 (GPRGFPGPPG…PGPPGPPGPG (122 aa)) is triple-helical region 3 (COL3). A compositionally biased stretch (pro residues) spans 925 to 935 (FPGPPGPPGVP). The N-linked (GlcNAc...) asparagine glycan is linked to asparagine 947. Over residues 951–963 (APGPAGLPGVPGK) the composition is skewed to low complexity. Collagen-like domains follow at residues 953 to 1007 (GPAG…GSKG) and 1008 to 1041 (DLGP…PPGP). Pro residues-rich tracts occupy residues 967 to 982 (PGFP…PGKE) and 1026 to 1041 (PVGP…PPGP). Residues 1043 to 1065 (FAAGFDDMEGSGIPLWTTARSSD) form a nonhelical region 4 (NC4) region. 4 Collagen-like domains span residues 1066 to 1117 (GLQG…GPKG), 1118 to 1147 (EKGM…PPGP), 1162 to 1202 (PGPE…GEPG), and 1216 to 1264 (QKGA…EPGD). The tract at residues 1066–1148 (GLQGPPGSPG…PGPPGPPGPV (83 aa)) is triple-helical region 4 (COL4). Over residues 1138 to 1147 (LPGPPGPPGP) the composition is skewed to pro residues. Residues 1149–1162 (IYVSSEDKAIVSTP) form a nonhelical region 5 (NC5) region. Residues 1163–1204 (GPEGKPGYAGFPGPAGPKGDLGSKGEQGLPGPKGEKGEPGTI) are triple-helical region 5 (COL5). The tract at residues 1205 to 1217 (FSPDGRALGHPQK) is nonhelical region 6 (NC6). Positions 1218–1290 (GAKGEPGFRG…PGPPGPPGMP (73 aa)) are triple-helical region 6 (COL6). A compositionally biased stretch (pro residues) spans 1275–1289 (PGPPGPPGPPGPPGM). Residues 1291–1300 (IYDSNAFVES) form a nonhelical region 7 (NC7) region. Positions 1301–1317 (GRPGLPGQQGVQGPSGP) are enriched in low complexity. A triple-helical region 7 (COL7) region spans residues 1301-1333 (GRPGLPGQQGVQGPSGPKGDKGEVGPPGPPGQF). Residues 1334–1345 (PIDLFHLEAEMK) form a nonhelical region 8 (NC8) region. Residues 1338-1362 (FHLEAEMKGDKGDRGDAGQKGERGE) are compositionally biased toward basic and acidic residues. Positions 1346 to 1369 (GDKGDRGDAGQKGERGEPGAPGGG) are triple-helical region 8 (COL8). A Cell attachment site motif is present at residues 1351–1353 (RGD). Positions 1370 to 1376 (FFSSSVP) are nonhelical region 9 (NC9). Pro residues-rich tracts occupy residues 1376–1388 (PGPP…PGIP), 1398–1407 (PPGPPGPQGP), 1418–1431 (PPGP…PSFP), and 1441–1453 (PGPP…PGPP). Residues 1377-1428 (GPPGPPGYPGIPGPKGESIRGPPGPPGPQGPPGIGYEGRQGPPGPPGPPGPP) are triple-helical region 9 (COL9). Residues 1429 to 1441 (SFPGPHRQTVSVP) form a nonhelical region 10 (NC10) region. The tract at residues 1442 to 1459 (GPPGPPGPPGPPGAMGAS) is triple-helical region 10 (COL10). The segment at 1460-1774 (AGQVRIWATY…ENSFMTSFSK (315 aa)) is nonhelical region 11 (NC11). The tract at residues 1474 to 1519 (DKIREVPEGWLIFVAEREELYVRVRNGFRKVLLEARTALPRGTGNE) is non-collagenous domain 1 association domain. The segment at 1520–1590 (VAALQPPLVQ…PPARPTLSLA (71 aa)) is non-collagenous domain 1 hinge region. Zn(2+) contacts are provided by histidine 1591, histidine 1593, aspartate 1595, histidine 1601, and aspartate 1666. Disulfide bonds link cysteine 1623/cysteine 1763 and cysteine 1725/cysteine 1755.

It belongs to the multiplexin collagen family. In terms of assembly, forms homotrimers. Recombinant non-collagenous domain 1 has stronger affinity to NID1, HSPG2 and laminin-1:NID1 complex and lower affinity to FBLN1 and FBLN2 than endostatin. As to quaternary structure, monomeric. Interacts with KDR/VEGFR2. Interacts with the ITGA5:ITGB1 complex. Interacts with NID1, HSPG2, laminin-1:NID1 complex, FBLN1 and FBLN2. Prolines at the third position of the tripeptide repeating unit (G-X-Y) of the triple-helical regions are hydroxylated. In terms of processing, undergoes proteolytic processing by CTSL/cathepsin-L and elastase-like proteases to generate both non-collagenous domain 1 trimers and endostatin monomers. In tissue extracts (brain, skeletal muscle, heart, kidney, testis and liver) predominantly bands of approximately 38 kDa are detected; recombinant non-collagenous domain 1 shows similar mobility. In vitro, several proteolytic cleavage sites in the non-collagenous domain 1 hinge region generating different endostatin-like peptides are reported. Expressed in liver, kidney, lung, skeletal muscle and testis.

The protein resides in the secreted. It localises to the extracellular space. Its subcellular location is the extracellular matrix. The protein localises to the basement membrane. Probably plays a major role in determining the retinal structure as well as in the closure of the neural tube. Its function is as follows. May regulate extracellular matrix-dependent motility and morphogenesis of endothelial and non-endothelial cells; the function requires homotrimerization and implicates MAPK signaling. In terms of biological role, potently inhibits endothelial cell proliferation and angiogenesis. May inhibit angiogenesis by binding to the heparan sulfate proteoglycans involved in growth factor signaling. Inhibits VEGFA isoform VEGF165-induced endothelial cell proliferation and migration. Seems to inhibit VEGFA-mediated signaling by blocking the interaction of VEGFA to its receptor KDR/VEGFR2. Modulates endothelial cell migration in an integrin-dependent manner implicating integrin ITGA5:ITGB1 and to a lesser extent ITGAV:ITGB3 and ITGAV:ITGB5. May negatively regulate the activity of homotrimeric non-collagenous domain 1. The polypeptide is Collagen alpha-1(XVIII) chain (Mus musculus (Mouse)).